A 116-amino-acid chain; its full sequence is Vitelline membrane protein Vm32E (116 aa).

Positions 1-17 (MQIVALTLVAFVAIAGA) are cleaved as a signal peptide. Residues 36–73 (GYPAPPCPTNYLFSCQPNLAPAPCAQEAPAYGSAGAYT) form the VM domain.

Belongs to the vitelline membrane family. In terms of processing, sulfated by pip; may be involved in embryo dorsal-ventral axis determination. Sulfation by pip may occur on covalently bound glycosaminoglycans. As to expression, expressed in stage 10 egg-chambers, localized in the outer eggshell (chorion membrane).

It localises to the secreted. Functionally, major early eggshell protein. This Drosophila melanogaster (Fruit fly) protein is Vitelline membrane protein Vm32E.